The sequence spans 605 residues: Elongation factor 4 (605 aa).

Residues 5–187 (ALIRNFSIIA…AVVERIPPPK (183 aa)) enclose the tr-type G domain. Residues 17 to 22 (DHGKST) and 134 to 137 (NKID) contribute to the GTP site.

It belongs to the TRAFAC class translation factor GTPase superfamily. Classic translation factor GTPase family. LepA subfamily.

The protein resides in the cell inner membrane. It catalyses the reaction GTP + H2O = GDP + phosphate + H(+). Functionally, required for accurate and efficient protein synthesis under certain stress conditions. May act as a fidelity factor of the translation reaction, by catalyzing a one-codon backward translocation of tRNAs on improperly translocated ribosomes. Back-translocation proceeds from a post-translocation (POST) complex to a pre-translocation (PRE) complex, thus giving elongation factor G a second chance to translocate the tRNAs correctly. Binds to ribosomes in a GTP-dependent manner. The protein is Elongation factor 4 of Novosphingobium aromaticivorans (strain ATCC 700278 / DSM 12444 / CCUG 56034 / CIP 105152 / NBRC 16084 / F199).